Reading from the N-terminus, the 411-residue chain is 2-oxoglutarate-dependent dioxygenase AOP3 (411 aa).

Residues 259–356 (GNASVGAKEA…RYAAALFSNP (98 aa)) form the Fe2OG dioxygenase domain. Fe cation-binding residues include H279, D281, and H336. R347 provides a ligand contact to 2-oxoglutarate.

This sequence belongs to the iron/ascorbate-dependent oxidoreductase family. It depends on Fe(2+) as a cofactor. As to expression, not expressed.

Its function is as follows. 2-oxoglutarate-dependent dioxygenase involved in glucosinolates biosynthesis. Catalyzes the conversion of methylsulfinylalkyl glucosinolates to hydroxyalkyl glucosinolates. The protein is 2-oxoglutarate-dependent dioxygenase AOP3 (AOP3) of Arabidopsis thaliana (Mouse-ear cress).